The primary structure comprises 242 residues: Small ribosomal subunit protein uS7m (242 aa).

A mitochondrion-targeting transit peptide spans 1–37 (MAAPTAKVSRGWSGLALGVRIAVLRLPGLTQVRWSRY). K228 is subject to N6-acetyllysine.

This sequence belongs to the universal ribosomal protein uS7 family. Component of the mitochondrial ribosome small subunit (28S) which comprises a 12S rRNA and about 30 distinct proteins.

Its subcellular location is the mitochondrion. This Bos taurus (Bovine) protein is Small ribosomal subunit protein uS7m (MRPS7).